The sequence spans 231 residues: Uridylate cyclase (231 aa).

Positions 46-178 constitute a Guanylate cyclase domain; it reads TVLYADLDGS…RAANYAAKLT (133 aa). Tyr49 is a binding site for a ribonucleoside 5'-triphosphate. Mn(2+)-binding residues include Asp51 and Asp95. Arg96 contacts a ribonucleoside 5'-triphosphate.

This sequence belongs to the adenylyl cyclase class-4/guanylyl cyclase family. Pyrimidine cyclase subfamily. Homodimer. The cofactor is Mn(2+).

Its subcellular location is the cytoplasm. The catalysed reaction is UTP = 3',5'-cyclic UMP + diphosphate. Functionally, pycsar (pyrimidine cyclase system for antiphage resistance) provides immunity against bacteriophage. The pyrimidine cyclase (PycC) synthesizes cyclic nucleotides in response to infection; these serve as specific second messenger signals. The signal activates the adjacent effector, leading to bacterial cell death and abortive phage infection. A clade B Pycsar system. The pyrimidine cyclase gene of a two-gene Pycsar system, generates cyclic UMP (cUMP) from UTP probably in response to bacteriophage infection. Expression of this and adjacent effector XpPycTIR (AC P0DV29) confers resistance to bacteriophage T7. When cells expressing the Pycsar system are infected phage T7 at low multiplicity of infection (0.2 MOI) the culture survives, at 2.0 MOI bacteria enter growth arrest. The same cells enter growth arrest after exposure to 2.5 mM cUMP but not cCMP; the effector protein responds only to the cUMP produced by its cognate NTP cyclase. The sequence is that of Uridylate cyclase from Xanthomonas perforans.